Here is a 260-residue protein sequence, read N- to C-terminus: Alpha-acetolactate decarboxylase (260 aa).

Belongs to the alpha-acetolactate decarboxylase family.

It carries out the reaction (2S)-2-acetolactate + H(+) = (R)-acetoin + CO2. It participates in polyol metabolism; (R,R)-butane-2,3-diol biosynthesis; (R,R)-butane-2,3-diol from pyruvate: step 2/3. Functionally, converts acetolactate into acetoin. This chain is Alpha-acetolactate decarboxylase (budA), found in Methylococcus capsulatus (strain ATCC 33009 / NCIMB 11132 / Bath).